The chain runs to 1362 residues: Insulin receptor (1362 aa).

An N-terminal signal peptide occupies residues 1–37; sequence MGQGVLRGEGHPNNNPNSKVGWKSLVGIITIFMLILC. The segment at 38–184 is leucine-rich region; the sequence is DQSDGKICYS…DSVEDNYIEL (147 aa). A disulfide bridge connects residues Cys45 and Cys63. N-linked (GlcNAc...) asparagine glycans are attached at residues Asn53, Asn115, and Asn148. Disulfide bonds link Cys163-Cys192, Cys196-Cys219, Cys206-Cys225, Cys229-Cys238, Cys233-Cys244, Cys245-Cys253, Cys249-Cys262, Cys265-Cys274, Cys278-Cys290, Cys296-Cys321, Cys303-Cys311, Cys325-Cys338, Cys341-Cys345, and Cys349-Cys370. Residue Asn332 is glycosylated (N-linked (GlcNAc...) asparagine). Asn374, Asn434, and Asn455 each carry an N-linked (GlcNAc...) asparagine glycan. Cysteines 472 and 505 form a disulfide. Fibronectin type-III domains follow at residues 508-629 and 633-730; these read NLLT…TNET and VPLD…IQKE. 5 N-linked (GlcNAc...) asparagine glycosylation sites follow: Asn551, Asn627, Asn642, Asn660, and Asn707. Disulfide bonds link Cys683/Cys896 and Cys822/Cys830. The interval 694–714 is disordered; that stretch reads WTPPTEIDENGNENQTEHTSV. Residues 705-714 show a composition bias toward polar residues; sequence NENQTEHTSV. The interval 741-749 is insulin-binding; it reads ENYLHNEVF. The Extracellular segment spans residues 759–951; sequence DLFGVANGTL…PDHPHSNIVK (193 aa). 2 N-linked (GlcNAc...) asparagine glycosylation sites follow: Asn765 and Asn779. Residues 849-944 enclose the Fibronectin type-III 3 domain; that stretch reads VVGPITYEYV…EQAYFQVPDH (96 aa). Residues Asn917 and Asn930 are each glycosylated (N-linked (GlcNAc...) asparagine). A helical transmembrane segment spans residues 952–972; it reads IITGPIIAVFLLLIVLVYCVV. The Cytoplasmic portion of the chain corresponds to 973–1362; the sequence is QKKKDAEGPA…ILSLPRSSPS (390 aa). Residue Tyr993 is modified to Phosphotyrosine; by autocatalysis. In terms of domain architecture, Protein kinase spans 1012-1287; it reads INLLRELGQG…MLKDDLRPSF (276 aa). ATP-binding positions include Ser1022, Lys1046, and 1093–1099; that span reads ELMAHGD. The active-site Proton donor/acceptor is the Asp1148. ATP is bound by residues 1152-1153 and Asp1166; that span reads RN. Phosphotyrosine; by autocatalysis occurs at positions 1174, 1178, 1179, 1335, and 1341.

This sequence belongs to the protein kinase superfamily. Tyr protein kinase family. Insulin receptor subfamily. As to quaternary structure, tetramer of 2 alpha and 2 beta chains linked by disulfide bonds. The alpha chains contribute to the formation of the ligand-binding domain, while the beta chains carry the kinase domain. Post-translationally, autophosphorylated on tyrosine residues in response to insulin. As to expression, localized mainly to the envelope in oocytes. Localized to the animal hemisphere during early embryonic cleavage. Expressed during organogenesis in regions of ecto- and mesodermic origins. Expressed in the entire encephalon, the otic and optic vesicles, the gills, the somites and the pronephric tubules of the embryo. Also found in adult liver, muscle and regenerated forelimbs.

Its subcellular location is the cell membrane. The enzyme catalyses L-tyrosyl-[protein] + ATP = O-phospho-L-tyrosyl-[protein] + ADP + H(+). Its activity is regulated as follows. Autophosphorylation activates the kinase activity. Functionally, receptor tyrosine kinase which mediates actions of insulin. May be required for forelimb regeneration. The protein is Insulin receptor (insr) of Xenopus laevis (African clawed frog).